The primary structure comprises 352 residues: Threonine synthase (352 aa).

An N6-(pyridoxal phosphate)lysine modification is found at Lys-59. Pyridoxal 5'-phosphate contacts are provided by residues Asn-85, 185–189 (GNAGN), and Thr-314.

Belongs to the threonine synthase family. Pyridoxal 5'-phosphate is required as a cofactor.

The catalysed reaction is O-phospho-L-homoserine + H2O = L-threonine + phosphate. It functions in the pathway amino-acid biosynthesis; L-threonine biosynthesis; L-threonine from L-aspartate: step 5/5. In terms of biological role, catalyzes the gamma-elimination of phosphate from L-phosphohomoserine and the beta-addition of water to produce L-threonine. The polypeptide is Threonine synthase (thrC) (Bacillus sp. (strain ULM1)).